The chain runs to 142 residues: Large ribosomal subunit protein uL13 (142 aa).

This sequence belongs to the universal ribosomal protein uL13 family. As to quaternary structure, part of the 50S ribosomal subunit.

Its function is as follows. This protein is one of the early assembly proteins of the 50S ribosomal subunit, although it is not seen to bind rRNA by itself. It is important during the early stages of 50S assembly. This chain is Large ribosomal subunit protein uL13, found in Pseudomonas putida (strain W619).